Consider the following 904-residue polypeptide: Copper-transporting ATPase ccc2 (904 aa).

Residues 1–172 lie on the Cytoplasmic side of the membrane; that stretch reads MYTTTLSVQG…GSQIRVWKIR (172 aa). Positions 2-68 constitute an HMA domain; sequence YTTTLSVQGM…KIEDCGFDAS (67 aa). Residues Cys13 and Cys16 each coordinate Cu(+). Residues 173 to 193 form a helical membrane-spanning segment; it reads FIISISFSLAVMFLPQIFDSC. The Lumenal, vesicle segment spans residues 194–197; the sequence is DSMR. Residues 198–218 traverse the membrane as a helical segment; sequence AAFLVPHYFGICAGHIISLVL. Residues 219 to 246 are Cytoplasmic-facing; sequence SLPVQFGVGRVYYSAAYHALKRGTANMD. Residues 247 to 267 form a helical membrane-spanning segment; that stretch reads VLVSLGSTVAFAASIFFMILY. Topologically, residues 268–278 are lumenal, vesicle; the sequence is SARHADNPAPI. The chain crosses the membrane as a helical span at residues 279–296; the sequence is FFDTADMLLTFVTLGRYL. Residues 297–431 lie on the Cytoplasmic side of the membrane; the sequence is ESKAKGSTSA…PIQQFADRVA (135 aa). Residues 432–452 form a helical membrane-spanning segment; that stretch reads GIFVPVIVALSISTFTFWFLF. Residues 453–469 are Lumenal, vesicle-facing; the sequence is TKYSSKYPSVFDDPMGK. Residues 470-490 form a helical membrane-spanning segment; that stretch reads FAVCLKLTISVVVVACPCALG. Topologically, residues 491–805 are cytoplasmic; that stretch reads LSTPTAVMVG…RIKMNLVWAC (315 aa). Asp529 serves as the catalytic 4-aspartylphosphate intermediate. Mg(2+) contacts are provided by Asp742 and Asp746. Residues 806 to 826 form a helical membrane-spanning segment; it reads IYNFVMIPIAMGFFLPWGIYL. At 827-828 the chain is on the lumenal, vesicle side; it reads NP. A helical membrane pass occupies residues 829 to 849; it reads MWASAAMMFSSLSVLASSLLL. Over 850–904 the chain is Cytoplasmic; the sequence is RRWKKPKSLIFSEADDVETESSTNSSVLQKVYTATRSIFGRNKSSNKYQPVANEV.

Belongs to the cation transport ATPase (P-type) (TC 3.A.3) family. Type IB subfamily.

It is found in the golgi apparatus. Its subcellular location is the trans-Golgi network membrane. It catalyses the reaction Cu(+)(in) + ATP + H2O = Cu(+)(out) + ADP + phosphate + H(+). In terms of biological role, probably involved in copper transport and in the regulation of cellular copper level. Retrieves copper from the metallochaperone atx1 and incorporates it into trans-Golgi vesicles. The protein is Copper-transporting ATPase ccc2 (ccc2) of Schizosaccharomyces pombe (strain 972 / ATCC 24843) (Fission yeast).